The sequence spans 260 residues: LOB domain-containing protein 6 (260 aa).

The 102-residue stretch at 32–133 (SPCAACKFLR…QDLARAKYEL (102 aa)) folds into the LOB domain.

The protein belongs to the LOB domain-containing protein family. As to quaternary structure, interacts with RS2. As to expression, expressed in leaves, leaf primordia, immature ears, immature tassels, whole ovules, silk and husk leaves. Found on the adaxial side of organs.

It localises to the nucleus. Functionally, promotes the switch from proliferation to differentiation in the embryo sac. Negative regulator of cell proliferation in the adaxial side of leaves. Regulates the formation of a symmetric lamina and the establishment of venation. Interacts directly with RS2 (rough sheath 2) to repress some knox homeobox genes. The sequence is that of LOB domain-containing protein 6 (LBD6) from Zea mays (Maize).